Reading from the N-terminus, the 883-residue chain is Bifunctional heparan sulfate N-deacetylase/N-sulfotransferase 2 (883 aa).

Over 1-18 (MLQLWKVVRPARQLELHR) the chain is Cytoplasmic. Residues 19-39 (LILLLIAFSLGSMGFLAYYVS) traverse the membrane as a helical; Signal-anchor for type II membrane protein segment. Residues 40–883 (TSPKAKEPLP…REELQHSSLG (844 aa)) lie on the Lumenal side of the membrane. The heparan sulfate N-deacetylase 2 stretch occupies residues 41–597 (SPKAKEPLPL…KRHKDIWSKE (557 aa)). The disordered stretch occupies residues 49–81 (PLPLGDCSSGGAAGPGPARPPVPPRPPRPPETA). Positions 65–78 (PARPPVPPRPPRPP) are enriched in pro residues. 3 N-linked (GlcNAc...) asparagine glycosylation sites follow: asparagine 233, asparagine 350, and asparagine 400. The segment at 598 to 883 (KTCDRLPKFL…REELQHSSLG (286 aa)) is heparan sulfate N-sulfotransferase 2. Lysine 613 functions as the For sulfotransferase activity in the catalytic mechanism. A 3'-phosphoadenylyl sulfate-binding site is contributed by 613–617 (KTGTT). A glycan (N-linked (GlcNAc...) asparagine) is linked at asparagine 666. A 3'-phosphoadenylyl sulfate-binding site is contributed by serine 711. 2 N-linked (GlcNAc...) asparagine glycosylation sites follow: asparagine 726 and asparagine 802. An intrachain disulfide couples cysteine 817 to cysteine 827. Residue 832 to 836 (KGRRY) participates in 3'-phosphoadenylyl sulfate binding.

This sequence belongs to the sulfotransferase 1 family. NDST subfamily. Monomer.

The protein resides in the golgi apparatus membrane. The catalysed reaction is alpha-D-glucosaminyl-[heparan sulfate](n) + 3'-phosphoadenylyl sulfate = N-sulfo-alpha-D-glucosaminyl-[heparan sulfate](n) + adenosine 3',5'-bisphosphate + 2 H(+). It participates in glycan metabolism; heparan sulfate biosynthesis. It functions in the pathway glycan metabolism; heparin biosynthesis. Functionally, essential bifunctional enzyme that catalyzes both the N-deacetylation and the N-sulfation of glucosamine (GlcNAc) of the glycosaminoglycan in heparan sulfate. Modifies the GlcNAc-GlcA disaccharide repeating sugar backbone to make N-sulfated heparosan, a prerequisite substrate for later modifications in heparin biosynthesis. Plays a role in determining the extent and pattern of sulfation of heparan sulfate. Required for the exosomal release of SDCBP, CD63 and syndecan. This is Bifunctional heparan sulfate N-deacetylase/N-sulfotransferase 2 (NDST2) from Homo sapiens (Human).